A 452-amino-acid chain; its full sequence is Photoreceptor ankyrin repeat protein (452 aa).

4 ANK repeats span residues 94–123, 130–160, 164–193, and 223–257; these read CRLG…SPEE, NGRT…DVNQ, GGDT…GLDL, and RGKT…QLSQ. 2 disordered regions span residues 335–369 and 405–427; these read LGTR…SPWV and SKAS…QSLA. Positions 349 to 362 are enriched in pro residues; that stretch reads APPPPLVPQSPPGS. The segment covering 406 to 424 has biased composition (polar residues); the sequence is KASSSSHQCQPKPSPSGHQ.

The protein resides in the cytoplasm. Its subcellular location is the cytosol. It localises to the nucleus. Acts as a transcriptional repressor for CRX-activated photoreceptor gene regulation. The chain is Photoreceptor ankyrin repeat protein from Homo sapiens (Human).